A 245-amino-acid polypeptide reads, in one-letter code: tRNA pseudouridine synthase A (245 aa).

Residue D52 is the Nucleophile of the active site. Position 110 (Y110) interacts with substrate.

This sequence belongs to the tRNA pseudouridine synthase TruA family. As to quaternary structure, homodimer.

The catalysed reaction is uridine(38/39/40) in tRNA = pseudouridine(38/39/40) in tRNA. In terms of biological role, formation of pseudouridine at positions 38, 39 and 40 in the anticodon stem and loop of transfer RNAs. The protein is tRNA pseudouridine synthase A of Borrelia hermsii (strain HS1 / DAH).